The chain runs to 376 residues: D-alanine--D-alanine ligase (376 aa).

Residues 155-361 (KIIFEKAGIP…YPELIEKLID (207 aa)) form the ATP-grasp domain. ATP is bound at residue 188–243 (EEKFSYPVFVKPSNAGSSVGVSKAHDKNELKEALIYAARYDRKVLIEEFINGREVE). 3 residues coordinate Mg(2+): Asp314, Glu328, and Asn330.

This sequence belongs to the D-alanine--D-alanine ligase family. The cofactor is Mg(2+). It depends on Mn(2+) as a cofactor.

Its subcellular location is the cytoplasm. The enzyme catalyses 2 D-alanine + ATP = D-alanyl-D-alanine + ADP + phosphate + H(+). It functions in the pathway cell wall biogenesis; peptidoglycan biosynthesis. Its function is as follows. Cell wall formation. The sequence is that of D-alanine--D-alanine ligase from Acetivibrio thermocellus (strain ATCC 27405 / DSM 1237 / JCM 9322 / NBRC 103400 / NCIMB 10682 / NRRL B-4536 / VPI 7372) (Clostridium thermocellum).